The chain runs to 3120 residues: DNA-directed RNA polymerase subunit beta'' (3120 aa).

Cysteine 323, cysteine 396, cysteine 403, and cysteine 406 together coordinate Zn(2+). An insert-1 region spans residues phenylalanine 595–phenylalanine 1130. Residues lysine 1796–leucine 2346 are insert-2. An insert-3 region spans residues asparagine 2422 to threonine 2610. The tract at residues phenylalanine 2726–leucine 2801 is insert-4. An insert-5 region spans residues alanine 2856 to aspartate 2996. The interval glutamate 2926–valine 2956 is disordered. Over residues lysine 2932–asparagine 2946 the composition is skewed to polar residues.

Belongs to the RNA polymerase beta' chain family. RpoC2 subfamily. In terms of assembly, in plastids the minimal PEP RNA polymerase catalytic core is composed of four subunits: alpha, beta, beta', and beta''. When a (nuclear-encoded) sigma factor is associated with the core the holoenzyme is formed, which can initiate transcription. Zn(2+) is required as a cofactor.

It localises to the plastid. The protein localises to the chloroplast. It carries out the reaction RNA(n) + a ribonucleoside 5'-triphosphate = RNA(n+1) + diphosphate. DNA-dependent RNA polymerase catalyzes the transcription of DNA into RNA using the four ribonucleoside triphosphates as substrates. The polypeptide is DNA-directed RNA polymerase subunit beta'' (Chlamydomonas reinhardtii (Chlamydomonas smithii)).